Consider the following 440-residue polypeptide: Microtubule-associated tumor suppressor 1 homolog (440 aa).

Residues 106–401 adopt a coiled-coil conformation; it reads IQHLLSEREE…RLSMENEELL (296 aa). Phosphoserine is present on residues S373, S394, S415, S425, S429, S431, S433, S434, and S438. The interval 407-440 is disordered; it reads GDLCSPKRSPTSSAIPFQSPRNSGSFSSPSISPR. A compositionally biased stretch (low complexity) spans 425–440; sequence SPRNSGSFSSPSISPR.

The protein belongs to the MTUS1 family. In terms of assembly, homodimer. Interacts with AGTR2. Interacts with PTPN6. As to expression, present in neurons (at protein level).

It localises to the mitochondrion. Its subcellular location is the golgi apparatus. The protein resides in the cell membrane. It is found in the nucleus. Functionally, cooperates with AGTR2 to inhibit ERK2 activation and cell proliferation. May be required for AGTR2 cell surface expression. Together with PTPN6, induces UBE2V2 expression upon angiotensin-II stimulation. This Rattus norvegicus (Rat) protein is Microtubule-associated tumor suppressor 1 homolog (Mtus1).